The following is a 521-amino-acid chain: U4/U6 small nuclear ribonucleoprotein Prp4 (521 aa).

K26 bears the N6-acetyllysine mark. WD repeat units follow at residues 228–267, 270–317, 320–359, 362–401, 404–443, 446–486, and 489–521; these read GDDR…LLHT, GHNT…PVAD, GHTV…EILH, GHSM…CIMF, GHLK…CVYT, AHQN…PLKT, and GHEG…WMAE.

As to quaternary structure, component of the precatalytic spliceosome (spliceosome B complex). Component of the U4/U6-U5 tri-snRNP complex, a building block of the precatalytic spliceosome (spliceosome B complex). The U4/U6-U5 tri-snRNP complex is composed of the U4, U6 and U5 snRNAs and at least PRPF3, PRPF4, PRPF6, PRPF8, PRPF31, SNRNP200, TXNL4A, SNRNP40, SNRPB, SNRPD1, SNRPD2, SNRPD3, SNRPE, SNRPF, SNRPG, DDX23, CD2BP2, PPIH, SNU13, EFTUD2, SART1 and USP39, plus LSM2, LSM3, LSM4, LSM5, LSM6, LSM7 and LSM8. Interacts directly with PRPF18, PPIH and PRPF3. Part of a heteromeric complex containing PPIH, PRPF3 and PRPF4 that is stable in the absence of RNA. Interacts with ERCC6.

It localises to the nucleus. It is found in the nucleus speckle. In terms of biological role, plays a role in pre-mRNA splicing as component of the U4/U6-U5 tri-snRNP complex that is involved in spliceosome assembly, and as component of the precatalytic spliceosome (spliceosome B complex). The protein is U4/U6 small nuclear ribonucleoprotein Prp4 (Prpf4) of Mus musculus (Mouse).